Here is a 258-residue protein sequence, read N- to C-terminus: Small ribosomal subunit protein mS35 (258 aa).

A mitochondrion-targeting transit peptide spans 1–39 (MAFNPLLSLLKADAIFLGQLSKSSFCATSRAFSVFYFTR).

This sequence belongs to the mitochondrion-specific ribosomal protein mS35 family. In terms of assembly, component of the mitochondrial small ribosomal subunit (mt-SSU). Mature yeast 74S mitochondrial ribosomes consist of a small (37S) and a large (54S) subunit. The 37S small subunit contains a 15S ribosomal RNA (15S mt-rRNA) and at least 32 different proteins. The 54S large subunit contains a 21S rRNA (21S mt-rRNA) and at least 45 different proteins.

Its subcellular location is the mitochondrion. Component of the mitochondrial ribosome (mitoribosome), a dedicated translation machinery responsible for the synthesis of mitochondrial genome-encoded proteins, including at least some of the essential transmembrane subunits of the mitochondrial respiratory chain. The mitoribosomes are attached to the mitochondrial inner membrane and translation products are cotranslationally integrated into the membrane. This is Small ribosomal subunit protein mS35 (rsm24) from Schizosaccharomyces pombe (strain 972 / ATCC 24843) (Fission yeast).